The primary structure comprises 261 residues: DNA repair protein RecO (261 aa).

The protein belongs to the RecO family.

Involved in DNA repair and RecF pathway recombination. This is DNA repair protein RecO from Pelodictyon phaeoclathratiforme (strain DSM 5477 / BU-1).